Reading from the N-terminus, the 66-residue chain is Neurotoxin-like protein STR1 (66 aa).

The region spanning 2 to 65 (RDGYIVHDGT…VWGEDGFMCW (64 aa)) is the LCN-type CS-alpha/beta domain. Disulfide bonds link Cys13–Cys64, Cys17–Cys40, Cys26–Cys45, and Cys30–Cys47.

The protein belongs to the long (4 C-C) scorpion toxin superfamily. Sodium channel inhibitor family. Beta subfamily. In terms of tissue distribution, expressed by the venom gland.

It localises to the secreted. Its function is as follows. This protein is not toxic. This Androctonus australis (Sahara scorpion) protein is Neurotoxin-like protein STR1.